A 464-amino-acid polypeptide reads, in one-letter code: tRNA modification GTPase MnmE (464 aa).

R27, E90, and K129 together coordinate (6S)-5-formyl-5,6,7,8-tetrahydrofolate. One can recognise a TrmE-type G domain in the interval 222–384 (GIALVLAGSV…LYDKIRSLTC (163 aa)). GTP contacts are provided by residues 232–237 (NVGKSS), 251–257 (SSYAGTT), and 276–279 (DTAG). 2 residues coordinate Mg(2+): S236 and T257. K464 lines the (6S)-5-formyl-5,6,7,8-tetrahydrofolate pocket.

It belongs to the TRAFAC class TrmE-Era-EngA-EngB-Septin-like GTPase superfamily. TrmE GTPase family. As to quaternary structure, homodimer. Heterotetramer of two MnmE and two MnmG subunits. K(+) is required as a cofactor.

The protein resides in the cytoplasm. In terms of biological role, exhibits a very high intrinsic GTPase hydrolysis rate. Involved in the addition of a carboxymethylaminomethyl (cmnm) group at the wobble position (U34) of certain tRNAs, forming tRNA-cmnm(5)s(2)U34. The protein is tRNA modification GTPase MnmE of Borrelia turicatae (strain 91E135).